A 550-amino-acid chain; its full sequence is MAFLRQTLWILWTFTMVIGQDNEKCSQKTLIGYRLKMSRDGDIAVGETVELRCRSGYTTYARNITATCLQGGTWSEPTATCNKKSCPNPGEIQNGKVIFHGGQDALKYGANISYVCNEGYFLVGREYVRYCMIGASGQMAWSSSPPFCEKEKCHRPKIENGDFKPDKDYYEYNDAVHFECNEGYTLVGPHSIACAVNNTWTSNMPTCELAGCKFPSVTHGYPIQGFSLTYKHKQSVTFACNDGFVLRGSPTITCNVTEWDPPLPKCVLEDIDDPNNSNPGRLHPTPNEKPNGNVFQRSNYTEPPTKPEDTHTAATCDTNCEQPPKILPTSEGFNETTTSNTITKQLEDEKTTSQPNTHITSALTSMKAKGNFTNKTNNSTDLHIASTPTSQDDATPSIPSVQTPNYNTNAPTRTLTSLHIEEGPSNSTTSEKATASTLSHNSHKNDTGGIYTTLNKTTQLPSTNKPTNSQAKSSTKPRVETHNKTTSNPAISLTDSADVPQRPREPTLPPIFRPPASKNRYLEKQLVIGLLTAVALTCGLITLFHYLFFR.

The first 19 residues, 1–19, serve as a signal peptide directing secretion; the sequence is MAFLRQTLWILWTFTMVIG. Sushi domains are found at residues 23 to 83, 84 to 150, 151 to 209, and 210 to 268; these read EKCS…TCNK, KSCP…FCEK, EKCH…TCEL, and AGCK…KCVL. 8 cysteine pairs are disulfide-bonded: Cys25–Cys68, Cys53–Cys81, Cys86–Cys131, Cys116–Cys148, Cys153–Cys194, Cys180–Cys207, Cys212–Cys254, and Cys240–Cys266. N-linked (GlcNAc...) asparagine; by host glycosylation is found at Asn63 and Asn111. N-linked (GlcNAc...) asparagine; by host glycosylation occurs at Asn197. Asn255, Asn275, and Asn299 each carry an N-linked (GlcNAc...) asparagine; by host glycan. The segment at 269–338 is disordered; the sequence is EDIDDPNNSN…TSEGFNETTT (70 aa). Polar residues-rich tracts occupy residues 288-302 and 312-321; these read EKPN…NYTE and TAATCDTNCE. N-linked (GlcNAc...) asparagine; by host glycosylation is found at Asn334, Asn371, Asn374, and Asn378. Disordered stretches follow at residues 387-408 and 420-516; these read TPTS…NYNT and IEEG…RPPA. A compositionally biased stretch (polar residues) spans 424 to 440; that stretch reads PSNSTTSEKATASTLSH. N-linked (GlcNAc...) asparagine; by host glycans are attached at residues Asn426, Asn445, Asn455, and Asn483. The span at 450-476 shows a compositional bias: polar residues; sequence IYTTLNKTTQLPSTNKPTNSQAKSSTK. Residues 484 to 495 show a composition bias toward polar residues; it reads KTTSNPAISLTD. A helical transmembrane segment spans residues 528–548; the sequence is IGLLTAVALTCGLITLFHYLF.

It is found in the host membrane. The protein localises to the virion membrane. Inhibits the complement component of the host innate immune response. Regulates host C3 convertases, accelerating their decay, and acts as a cofactor for factor I degradation of C4b and C3b. Also binds heparin, and therefore may play two distinct roles when incorporated in virion membranes: immune evasion and host cell binding. This chain is Complement control protein (ORF4), found in Human herpesvirus 8 type P (isolate GK18) (HHV-8).